The primary structure comprises 8384 residues: Mucin-19 (8384 aa).

The signal sequence occupies residues 1 to 21 (MKLILWYLVVALWCFFKDVEA). Disordered regions lie at residues 33-197 (AASR…YGAG), 222-247 (SKADGRETRGSGSAGGETIVFGPDAG), 279-305 (GDTGISSKTVEGNQTSSSGGSVSIDLG), and 332-467 (QEGF…PEAT). 2 stretches are compositionally biased toward low complexity: residues 35–48 (SRSGGFSYGSSSSG) and 88–98 (GGFFNSSSSSG). The segment covering 169–184 (DKSRERWDAGNSRSED) has biased composition (basic and acidic residues). Over residues 187–197 (ADSTNTRYGAG) the composition is skewed to polar residues. Residues 279 to 299 (GDTGISSKTVEGNQTSSSGGS) show a composition bias toward polar residues. Residues 359-369 (GSDSSSSGDSS) show a composition bias toward low complexity. The span at 370 to 381 (ARNGFENSSGIS) shows a compositional bias: polar residues. Low complexity-rich tracts occupy residues 424–435 (SDSGGNTWSSDS) and 443–452 (TSSSEYSTSG). 3 VWFD domains span residues 478–649 (GEIS…QHCN), 815–995 (GRCK…SSCI), and 1274–1447 (TICH…QECS). 8 disulfide bridges follow: Cys-502/Cys-648, Cys-817/Cys-952, Cys-838/Cys-994, Cys-857/Cys-865, Cys-1276/Cys-1411, Cys-1298/Cys-1446, Cys-1307/Cys-1408, and Cys-1323/Cys-1330. Disordered regions lie at residues 1680–1699 (TSSSETTGTTLGPLTEPFTT), 1732–2464 (AGTT…KSPG), 2484–2526 (LESE…TEGS), 2540–2827 (RPLD…MTGT), 2850–2917 (STVG…LGTI), 2984–3027 (VTTG…SGTT), 3075–3368 (GTTG…GKTG), 3386–3428 (TTRL…GKTG), 3585–3628 (ETTG…TNGL), 3667–3736 (GSSA…TGLP), 4105–4147 (TGSS…NGLS), 4187–4251 (SAGV…AEVT), 4315–4390 (GLSA…SARV), 4414–4455 (TGSS…TNGQ), 4510–4583 (TGTT…TGLP), 4790–4843 (TGTT…TGLP), 4895–4930 (SSAGVTGTNGLSAEATETTGPSAGVTGTTGLSAGVT), 5130–5161 (TGTTGPSAEETGATGPSAEVTGTTGPSGGVTG), 5429–5452 (VTGTTELSAEVTEKTGPSAEVTGK), 5464–5494 (GPSAEVTGTTGSSAGVTGTTGPSAGVTGTTG), 5880–5918 (GTSIPLTGKTGTTRTSVEESTTTGPSAGITGTNGLSAEM), 6069–6403 (TGKT…STES), 6440–6918 (GRAT…ETTK), 6953–7223 (GTSE…TGFK), 7250–7749 (SFST…SKTG), 7783–7975 (KNGS…EAGS), and 8020–8133 (SGRS…VSQP). Low complexity-rich tracts occupy residues 1732-1746 (AGTTGGVDAATTGAA), 1772-1813 (PGEA…TTGP), and 1820-1833 (GATSSEATSSEGMS). Polar residues predominate over residues 1835-1860 (VTGQSLGSTAGSDSEITAKTSFTGSS). A compositionally biased stretch (low complexity) spans 1868 to 1879 (PSPGSPGHFSGG). Over residues 1880-1905 (TTEWGNVATTGAAGENTSGALGSTEG) the composition is skewed to polar residues. The span at 1909–1921 (ATTSAGSGNTAGT) shows a compositional bias: low complexity. The segment covering 1950–1968 (GSSTPGEADIGNTSFGKSG) has biased composition (polar residues). Low complexity-rich tracts occupy residues 1969–1983 (TPTVSAASTTSSPVS) and 2013–2049 (GGKITSGWSSSGTSTGASNTPGATGSSTGQTDTSGPS). Residues 2055–2100 (NYGQSSEIPGTIKSSSDVSGTMGQSDTTSGPSVAVTRTSEQSSGVT) are compositionally biased toward polar residues. Composition is skewed to low complexity over residues 2132-2147 (TTGSSAEGSGTTGPSS) and 2159-2170 (GSGTSGQSVTGS). Composition is skewed to polar residues over residues 2171 to 2186 (RATGLSATELGTTVSF) and 2209 to 2225 (GSGTTGPSVVRSGTTRL). 2 stretches are compositionally biased toward low complexity: residues 2233–2246 (TESSPGVTGTTTPS) and 2280–2313 (SGPSVVGSGTTGPTSAGLGTTAPSTRRSSTTKPS). Residues 2238-6086 (GVTGTTTPSA…GVTGTTGLSA (3849 aa)) are approximate repeats of G-V-T-G-T-T-G-P-S-A. 2 stretches are compositionally biased toward polar residues: residues 2316–2332 (RTGTTGQSGAESGTTEP) and 2354–2372 (ATESSTSRPLGETTGTTIP). Positions 2403-2419 (SSGGSGATRSSGGGMGT) are enriched in gly residues. Positions 2420 to 2441 (TGQSTARSETTGPLFGLTGTFG) are enriched in low complexity. Polar residues predominate over residues 2442-2460 (QSATVTGTSSNSAGVTTPE). Composition is skewed to low complexity over residues 2512–2526 (SAGETGTTEPSTEGS), 2545–2571 (GSGTTGTLSGGSSTTRSSDGTTGTTRK), and 2578–2589 (TTGLSGLTGTSG). 2 stretches are compositionally biased toward polar residues: residues 2595–2610 (TGTSSKSAGVTVTSEK) and 2638–2653 (TRPSGGVTVTSGQSAR). Over residues 2654 to 2681 (VTETVGASAGVTGTTGPSTEGSGATGPS) the composition is skewed to low complexity. Polar residues-rich tracts occupy residues 2695–2748 (SGTT…TGTT) and 2755–2770 (TETTRPSVVKSGTTGP). Low complexity predominate over residues 2787 to 2799 (ATRSSGGETETTG). Polar residues-rich tracts occupy residues 2800–2827 (QSAVKSGTTESFTRLTRTSGQSAGMTGT), 2850–2859 (STVGLETTRP), and 2874–2892 (AQTTGPSAGVTVTSGQSAR). The segment covering 2894 to 2910 (TGASGPSVGVTGTTGPA) has biased composition (low complexity). Polar residues predominate over residues 2984–2998 (VTTGPSVTGVETTAK). Over residues 2999–3027 (TTSGGLSTTISSVGGTGTTGQSPERSGTT) the composition is skewed to low complexity. The span at 3099 to 3109 (PSITGSGTTRP) shows a compositional bias: polar residues. Low complexity predominate over residues 3114–3130 (SWTAGTSSGGHSTTSPS). Polar residues predominate over residues 3131–3159 (VRGTETTGQSAAESVTTGPVTGYTETSGP). Low complexity predominate over residues 3172 to 3188 (TVTQTTGSSAAVSGTTV). Residues 3189–3224 (QSLTVSGTTRPSSGQTEITGSSVKESGTTESSAVRS) are compositionally biased toward polar residues. Low complexity predominate over residues 3225–3277 (GTTGPTAGVTGTNGPSSAGVTGITGSSPGVTGTTGSSPGVTGTTGSSARSGTS). Polar residues-rich tracts occupy residues 3303-3317 (ITGTNGLSAEVTGTT) and 3324-3362 (TGTTGPSAGVTRTTGLSAGETGTTGLSPGVTRTTRSSAG). Over residues 3390–3417 (SAGVTGTTGPSPGVTGTTGTPAGVTGTT) the composition is skewed to low complexity. 2 stretches are compositionally biased toward polar residues: residues 3702-3728 (VTGTTGLSPGVTGTSGLSAEVTGTTGP) and 4105-4116 (TGSSARSGTSIP). Low complexity predominate over residues 4117-4126 (SVGETGTTRT). The span at 4320-4346 (VTGTTRPSAGVTGTTGQSAEVTGTTEP) shows a compositional bias: polar residues. Low complexity-rich tracts occupy residues 4347–4385 (SAGLTETTGSSTGVTGATGPLAGVTGTTGISTEVTGTTG) and 4414–4426 (TGSSARSGTSTPS). Low complexity-rich tracts occupy residues 5469 to 5494 (VTGTTGSSAGVTGTTGPSAGVTGTTG) and 5889 to 5903 (TGTTRTSVEESTTTG). Polar residues-rich tracts occupy residues 5908–5918 (ITGTNGLSAEM), 6071–6103 (KTRSSAGVTGTTGLSAKSGTSIPSAGKTGTTKT), and 6111–6121 (TRPSAGITATT). Residues 6156 to 6168 (TTTGTTGVTTGTT) show a composition bias toward low complexity. 2 stretches are compositionally biased toward polar residues: residues 6217-6248 (EVSTISEVSNTGITGVGSETSIETGISNTATT) and 6257-6275 (APGSSSTEATTSIGGSAST). Residues 6284 to 6295 (TGSTRGVRTTGS) are compositionally biased toward low complexity. 2 stretches are compositionally biased toward polar residues: residues 6303-6323 (GEFSGTTISSGGFHTEATTLT) and 6336-6346 (ESTTSLPQSAK). Residues 6378–6389 (SGTTISSGGSHT) are compositionally biased toward low complexity. Polar residues-rich tracts occupy residues 6440-6457 (GRATGATTSIAGSDTSQA) and 6470-6503 (TTITSGDSHTEATALTGSRGSIGTESTVETTTYI). The span at 6507–6523 (GTTRGGLATATTGAFSG) shows a compositional bias: low complexity. Polar residues predominate over residues 6560–6571 (TTFTSGGSHTEA). The span at 6581–6597 (TGTESRAATTRAAPGTT) shows a compositional bias: low complexity. The span at 6599-6608 (VPGSSNTGAT) shows a compositional bias: polar residues. The segment covering 6612 to 6628 (GGSATTRGRITTATTGA) has biased composition (low complexity). Polar residues-rich tracts occupy residues 6669 to 6680 (RITSGGSYTATT) and 6689 to 6698 (APGSSNTGAT). Residues 6707–6718 (TRGRITTATTGA) are compositionally biased toward low complexity. Polar residues predominate over residues 6752–6766 (TTLTGDRSSTGSESR). Over residues 6767–6781 (TATTGVAPGTTVAPG) the composition is skewed to low complexity. The span at 6794 to 6817 (SGTTNIGRATGATTSIVGSDTSQA) shows a compositional bias: polar residues. The segment covering 6827-6842 (SPGASSTSQSSRPGTS) has biased composition (low complexity). The segment covering 6843 to 6875 (VTPDSSASESETVTTKEFSGTTAISRTSHTGTP) has biased composition (polar residues). A compositionally biased stretch (low complexity) spans 6887–6901 (TATTGVAPGTTVAPG). Polar residues-rich tracts occupy residues 6902–6911 (SSNTEATTSV) and 6953–6964 (GTSEVAPSTTVA). The segment covering 6966-6994 (GSFSTAATTSPGASGTTGVTTTTKTTTSL) has biased composition (low complexity). Over residues 7006–7041 (SATTGAPGSRTGTAGVPSATTVSPGSSNSEATTSVG) the composition is skewed to polar residues. The segment covering 7045–7074 (KTGAETITEATTSTEGTGTSGTGFKTGTSE) has biased composition (low complexity). Positions 7085–7094 (SFSTAATTSP) are enriched in polar residues. A compositionally biased stretch (low complexity) spans 7095–7112 (GASGMTGVTTTTKTTTSL). A compositionally biased stretch (polar residues) spans 7143 to 7158 (TRVTPGSSNSEATTSV). 2 stretches are compositionally biased toward low complexity: residues 7201–7215 (SGSSNTEATTSTEGT) and 7250–7276 (SFSTATTSSGASGITRAGPTSETTTSL). The span at 7293 to 7311 (SGTTVAPGSSNSEATTSVG) shows a compositional bias: polar residues. The span at 7379-7397 (TTSTKGTGTSGTGFKTGTS) shows a compositional bias: low complexity. Over residues 7403–7421 (TTVSPGSFSTATISPGASR) the composition is skewed to polar residues. The span at 7422-7435 (TTGAAPAAETTTSL) shows a compositional bias: low complexity. The segment covering 7465 to 7483 (SATTIAPGSSNSEATTSLG) has biased composition (polar residues). A compositionally biased stretch (gly residues) spans 7525–7537 (PLGGASGTSGGYV). Polar residues-rich tracts occupy residues 7544–7557 (PTTSIEETGTSRTI) and 7571–7596 (AGTSVVAPSTTVAPGSFSTAATTSPG). A compositionally biased stretch (low complexity) spans 7600–7613 (MTGVRTTSKTTTSL). Polar residues-rich tracts occupy residues 7642-7669 (SSRTTILSGSSNTEATNSIEETGTSGTG) and 7698-7708 (SFSTAATTSPG). The span at 7715–7732 (TGPTAETTTFLGGSSTTG) shows a compositional bias: low complexity. Residues 7783 to 7811 (KNGSMTTALGSQLSSSQTVIPGSSGTISH) show a composition bias toward polar residues. Residues 7812–7828 (TTVAPGSSVTGTTTGAS) are compositionally biased toward low complexity. A compositionally biased stretch (polar residues) spans 7830–7851 (DQVTGSKTGTTGVALSTTVAPG). The span at 7852-7861 (SSSTEATTST) shows a compositional bias: low complexity. Over residues 7862-7891 (GVHRTTVVGQKTGATTRGSAKQGTRSTIEA) the composition is skewed to polar residues. The segment covering 7892-7917 (TTSFRGTGTTGSGMNTGTTGVVSGNT) has biased composition (low complexity). Polar residues predominate over residues 7918–7934 (ISPSSFNTEATSGTSER). Positions 7938–7952 (GSEIGTTGIVSGTTV) are enriched in low complexity. Composition is skewed to polar residues over residues 7953–7965 (APGSSNTEATTSL), 8020–8040 (SGRSQPTGSKTGYTVTGSGTT), 8048–8081 (TGNTPGSTGVTSSQEGTTVVSSGITGIPETSISG), and 8110–8120 (ETGVQTGSTLV). A VWFC domain is found at 8159 to 8225 (PVCHGPLGEE…DTCCEIGYCE (67 aa)). 4 disulfide bridges follow: Cys-8288–Cys-8339, Cys-8306–Cys-8353, Cys-8315–Cys-8369, and Cys-8319–Cys-8371. The CTCK domain occupies 8288-8376 (CKNNCRSSLV…TTCSCLDICQ (89 aa)).

In terms of tissue distribution, expressed corneal epithelial cells, conjunctival goblet and epithelial cells and lacrimal gland cells (at protein level). Expressed by mucous cells of the submandibular gland and submucosal gland of the trachea. Expressed by middle ear epithelial cells.

It is found in the secreted. Its function is as follows. May function in ocular mucus homeostasis. This is Mucin-19 (MUC19) from Homo sapiens (Human).